The chain runs to 558 residues: 2-isopropylmalate synthase (558 aa).

In terms of domain architecture, Pyruvate carboxyltransferase spans 30–303 (PIWCSVDLRD…DPKLDCSDIE (274 aa)). 4 residues coordinate Mg(2+): Asp-39, His-242, His-244, and Asn-278. The interval 437 to 558 (QPGARIKFVD…ANRVLDVVGK (122 aa)) is regulatory domain.

The protein belongs to the alpha-IPM synthase/homocitrate synthase family. LeuA type 2 subfamily. In terms of assembly, homodimer. Mg(2+) is required as a cofactor.

It localises to the cytoplasm. It catalyses the reaction 3-methyl-2-oxobutanoate + acetyl-CoA + H2O = (2S)-2-isopropylmalate + CoA + H(+). Its pathway is amino-acid biosynthesis; L-leucine biosynthesis; L-leucine from 3-methyl-2-oxobutanoate: step 1/4. Functionally, catalyzes the condensation of the acetyl group of acetyl-CoA with 3-methyl-2-oxobutanoate (2-ketoisovalerate) to form 3-carboxy-3-hydroxy-4-methylpentanoate (2-isopropylmalate). The protein is 2-isopropylmalate synthase of Rhizobium meliloti (strain 1021) (Ensifer meliloti).